The sequence spans 71 residues: Pro-MCH (71 aa).

An N-terminal signal peptide occupies residues 1–20 (AKMSLSSYILILTLVLFSQG).

Belongs to the melanin-concentrating hormone family.

The protein resides in the secreted. The polypeptide is Pro-MCH (PMCH) (Carlito syrichta (Philippine tarsier)).